Here is an 833-residue protein sequence, read N- to C-terminus: Probable serine/threonine-protein kinase DDB_G0277165 (833 aa).

The region spanning F9–F262 is the Protein kinase domain. Residues L15–V23 and K38 each bind ATP. Residue D133 is the Proton acceptor of the active site. In terms of domain architecture, UBA spans Q288–E329. Residues N338 to S351 are compositionally biased toward basic and acidic residues. Disordered stretches follow at residues N338–S472, Q528–I626, and F764–N799. 2 stretches are compositionally biased toward low complexity: residues N365 to N432 and S441 to S459. Residues N460–S472 show a composition bias toward polar residues. Residues Q528–S589 show a composition bias toward low complexity. Polar residues predominate over residues G600–E625.

It belongs to the protein kinase superfamily. CAMK Ser/Thr protein kinase family.

It carries out the reaction L-seryl-[protein] + ATP = O-phospho-L-seryl-[protein] + ADP + H(+). It catalyses the reaction L-threonyl-[protein] + ATP = O-phospho-L-threonyl-[protein] + ADP + H(+). The chain is Probable serine/threonine-protein kinase DDB_G0277165 from Dictyostelium discoideum (Social amoeba).